Consider the following 754-residue polypeptide: 5-methyltetrahydropteroyltriglutamate--homocysteine methyltransferase (754 aa).

5-methyltetrahydropteroyltri-L-glutamate-binding positions include 15-18 and Lys-114; that span reads RELK. L-homocysteine contacts are provided by residues 430–432 and Glu-483; that span reads IGS. L-methionine is bound by residues 430–432 and Glu-483; that span reads IGS. Residues 514–515 and Trp-560 contribute to the 5-methyltetrahydropteroyltri-L-glutamate site; that span reads RC. Asp-598 provides a ligand contact to L-homocysteine. L-methionine is bound at residue Asp-598. Glu-604 lines the 5-methyltetrahydropteroyltri-L-glutamate pocket. Positions 641, 643, and 665 each coordinate Zn(2+). His-694 (proton donor) is an active-site residue. Cys-726 serves as a coordination point for Zn(2+).

It belongs to the vitamin-B12 independent methionine synthase family. It depends on Zn(2+) as a cofactor.

The enzyme catalyses 5-methyltetrahydropteroyltri-L-glutamate + L-homocysteine = tetrahydropteroyltri-L-glutamate + L-methionine. The protein operates within amino-acid biosynthesis; L-methionine biosynthesis via de novo pathway; L-methionine from L-homocysteine (MetE route): step 1/1. Catalyzes the transfer of a methyl group from 5-methyltetrahydrofolate to homocysteine resulting in methionine formation. The sequence is that of 5-methyltetrahydropteroyltriglutamate--homocysteine methyltransferase from Campylobacter jejuni subsp. jejuni serotype O:23/36 (strain 81-176).